A 274-amino-acid chain; its full sequence is Thymidylate synthase (274 aa).

Position 21 (Arg21) interacts with dUMP. Position 51 (His51) interacts with (6R)-5,10-methylene-5,6,7,8-tetrahydrofolate. 123–124 (RR) lines the dUMP pocket. The active-site Nucleophile is the Cys156. DUMP contacts are provided by residues 176-179 (RSAD), Asn187, and 217-219 (HIY). Position 179 (Asp179) interacts with (6R)-5,10-methylene-5,6,7,8-tetrahydrofolate. Ser273 lines the (6R)-5,10-methylene-5,6,7,8-tetrahydrofolate pocket.

This sequence belongs to the thymidylate synthase family. Bacterial-type ThyA subfamily. Homodimer.

The protein resides in the cytoplasm. It catalyses the reaction dUMP + (6R)-5,10-methylene-5,6,7,8-tetrahydrofolate = 7,8-dihydrofolate + dTMP. It participates in pyrimidine metabolism; dTTP biosynthesis. In terms of biological role, catalyzes the reductive methylation of 2'-deoxyuridine-5'-monophosphate (dUMP) to 2'-deoxythymidine-5'-monophosphate (dTMP) while utilizing 5,10-methylenetetrahydrofolate (mTHF) as the methyl donor and reductant in the reaction, yielding dihydrofolate (DHF) as a by-product. This enzymatic reaction provides an intracellular de novo source of dTMP, an essential precursor for DNA biosynthesis. In Francisella tularensis subsp. novicida (strain U112), this protein is Thymidylate synthase.